A 677-amino-acid chain; its full sequence is Bargin (677 aa).

Composition is skewed to low complexity over residues 1-13 (MDRG…TPAV) and 29-39 (APHAAAGPDGQ). Disordered stretches follow at residues 1–39 (MDRG…PDGQ) and 168–190 (SQAT…HSHT). Positions 25–270 (EEAAAPHAAA…RENHGQADHS (246 aa)) constitute a BAR domain. A phosphoserine mark is found at Ser-183, Ser-270, and Ser-272. One can recognise a Rho-GAP domain in the interval 284–477 (VSLATHLQEL…ALIQSADTLF (194 aa)). The segment at 504–577 (SEELPSTAVP…DMARRSTGSL (74 aa)) is disordered. Residues 516–530 (ATTPAPAPAPAPAPA) show a composition bias toward pro residues. Ser-552 and Ser-558 each carry phosphoserine. Residues 574–677 (TGSLAAAVET…IADLTEGLED (104 aa)) form a mediates non-covalent binding of poly-ubiquitin chains region.

In terms of tissue distribution, expressed in brain (at protein level).

The protein localises to the cell membrane. The protein resides in the cytoplasm. It localises to the cytosol. In terms of biological role, GTPase activating protein (GAP) which specifically converts GTP-bound RAC1 and CDC42 in their inactive GDP-bound form. The GAP activity is enhanced by the non-covalent binding of K-29 and K-48 polyubiquitin chains. This Homo sapiens (Human) protein is Bargin.